The sequence spans 253 residues: GTP cyclohydrolase 1 type 2 homolog (253 aa).

Residues histidine 64, histidine 65, aspartate 101, histidine 222, and glutamate 226 each contribute to the a divalent metal cation site.

It belongs to the GTP cyclohydrolase I type 2/NIF3 family. As to quaternary structure, homohexamer.

The polypeptide is GTP cyclohydrolase 1 type 2 homolog (Halobacterium salinarum (strain ATCC 700922 / JCM 11081 / NRC-1) (Halobacterium halobium)).